Reading from the N-terminus, the 386-residue chain is S-adenosylmethionine synthase (386 aa).

Position 14 (H14) interacts with ATP. A Mg(2+)-binding site is contributed by D16. E42 is a K(+) binding site. L-methionine contacts are provided by E55 and Q98. The tract at residues 98–108 is flexible loop; it reads QSGDISQGVDG. Residues 162-164, 230-231, D239, 245-246, A262, and K266 each bind ATP; these read DSK, RF, and RK. L-methionine is bound at residue D239. Residue K270 participates in L-methionine binding.

This sequence belongs to the AdoMet synthase family. Homotetramer; dimer of dimers. Mg(2+) is required as a cofactor. It depends on K(+) as a cofactor.

The protein resides in the cytoplasm. It catalyses the reaction L-methionine + ATP + H2O = S-adenosyl-L-methionine + phosphate + diphosphate. Its pathway is amino-acid biosynthesis; S-adenosyl-L-methionine biosynthesis; S-adenosyl-L-methionine from L-methionine: step 1/1. In terms of biological role, catalyzes the formation of S-adenosylmethionine (AdoMet) from methionine and ATP. The overall synthetic reaction is composed of two sequential steps, AdoMet formation and the subsequent tripolyphosphate hydrolysis which occurs prior to release of AdoMet from the enzyme. The polypeptide is S-adenosylmethionine synthase (Salinibacter ruber (strain DSM 13855 / M31)).